A 281-amino-acid polypeptide reads, in one-letter code: Pantothenate synthetase (281 aa).

30–37 serves as a coordination point for ATP; that stretch reads MGNLHQGH. His-37 acts as the Proton donor in catalysis. Gln-61 lines the (R)-pantoate pocket. Gln-61 lines the beta-alanine pocket. 149–152 is an ATP binding site; sequence GRKD. A (R)-pantoate-binding site is contributed by Gln-155. ATP contacts are provided by residues Ile-178 and 186–189; that span reads MSSR.

It belongs to the pantothenate synthetase family. In terms of assembly, homodimer.

Its subcellular location is the cytoplasm. It catalyses the reaction (R)-pantoate + beta-alanine + ATP = (R)-pantothenate + AMP + diphosphate + H(+). The protein operates within cofactor biosynthesis; (R)-pantothenate biosynthesis; (R)-pantothenate from (R)-pantoate and beta-alanine: step 1/1. In terms of biological role, catalyzes the condensation of pantoate with beta-alanine in an ATP-dependent reaction via a pantoyl-adenylate intermediate. In Shewanella denitrificans (strain OS217 / ATCC BAA-1090 / DSM 15013), this protein is Pantothenate synthetase.